Consider the following 79-residue polypeptide: Putative antitoxin VapB1 (79 aa).

In terms of biological role, antitoxin component of a possible type II toxin-antitoxin (TA) system. The cognate toxin is VapC1. The chain is Putative antitoxin VapB1 (vapB1) from Mycobacterium tuberculosis (strain ATCC 25618 / H37Rv).